Consider the following 84-residue polypeptide: Large ribosomal subunit protein bL27 (84 aa).

The segment at M1–G22 is disordered.

Belongs to the bacterial ribosomal protein bL27 family.

In Shewanella loihica (strain ATCC BAA-1088 / PV-4), this protein is Large ribosomal subunit protein bL27.